A 319-amino-acid chain; its full sequence is Large ribosomal subunit protein uL10 (319 aa).

Positions 289–319 are disordered; that stretch reads EQKSAAPAAKEEAPKEDSEESDEDMGFGLFD.

This sequence belongs to the universal ribosomal protein uL10 family. As to quaternary structure, P0 forms a pentameric complex by interaction with dimers of P1 and P2. In terms of processing, phosphorylated.

The protein resides in the nucleus. It is found in the cytoplasm. In terms of biological role, ribosomal protein P0 is the functional equivalent of E.coli protein L10. The sequence is that of Large ribosomal subunit protein uL10 (rplp0) from Danio rerio (Zebrafish).